The sequence spans 316 residues: MGLAGTKVKQRFGLDPRNTNWSNDTSRFGHQYLERMGWKPGKGLGLVEHATTSHVKVSIKDDNLGLGSKLAKKQKTDEFDSGECSGLDVFQRILGRLNGKEDQINKEIERKRKDNIINGKWGIQFIKGEVLQSTWDKEAKKLLDKGTTKKRKIDSVDSSEESTTSSDSKQHKKKKIKKDRKEKEEKKTEKENSEIKKKKKEKKEKKEKKEKKDKNEKKEKKDKNEKKEKKDKNEEKEKKEKKEKKEKKDKKDKKDKKDKKEKKEVKEVTRDSMLMPKEQLNQQIATRLSVRSKWIKQKRASVMDAKALNEIFMVTS.

The G-patch domain occupies 25–71 (TSRFGHQYLERMGWKPGKGLGLVEHATTSHVKVSIKDDNLGLGSKLA). Residues 146–280 (GTTKKRKIDS…DSMLMPKEQL (135 aa)) are disordered. Positions 179–195 (DRKEKEEKKTEKENSEI) are enriched in basic and acidic residues. The segment covering 196–209 (KKKKKEKKEKKEKK) has biased composition (basic residues). Basic and acidic residues predominate over residues 210–240 (EKKDKNEKKEKKDKNEKKEKKDKNEEKEKKE). Positions 241-260 (KKEKKEKKDKKDKKDKKDKK) are enriched in basic residues. Residues 261–270 (EKKEVKEVTR) are compositionally biased toward basic and acidic residues.

The protein belongs to the PINX1 family.

The protein localises to the nucleus. It localises to the nucleolus. Involved in rRNA-processing at A0, A1 and A2 sites and negatively regulates telomerase. This Debaryomyces hansenii (strain ATCC 36239 / CBS 767 / BCRC 21394 / JCM 1990 / NBRC 0083 / IGC 2968) (Yeast) protein is Protein PXR1 (PXR1).